The chain runs to 132 residues: Nickel-responsive regulator (132 aa).

The Ni(2+) site is built by H76, H87, H89, and C95.

This sequence belongs to the transcriptional regulatory CopG/NikR family. Homotetramer. It depends on Ni(2+) as a cofactor.

Its function is as follows. Transcriptional repressor of the nikABCDE operon. Is active in the presence of excessive concentrations of intracellular nickel. This is Nickel-responsive regulator from Klebsiella pneumoniae (strain 342).